We begin with the raw amino-acid sequence, 173 residues long: ATP synthase subunit delta (173 aa).

Belongs to the ATPase delta chain family. In terms of assembly, F-type ATPases have 2 components, F(1) - the catalytic core - and F(0) - the membrane proton channel. F(1) has five subunits: alpha(3), beta(3), gamma(1), delta(1), epsilon(1). F(0) has three main subunits: a(1), b(2) and c(10-14). The alpha and beta chains form an alternating ring which encloses part of the gamma chain. F(1) is attached to F(0) by a central stalk formed by the gamma and epsilon chains, while a peripheral stalk is formed by the delta and b chains.

The protein localises to the cell inner membrane. Its function is as follows. F(1)F(0) ATP synthase produces ATP from ADP in the presence of a proton or sodium gradient. F-type ATPases consist of two structural domains, F(1) containing the extramembraneous catalytic core and F(0) containing the membrane proton channel, linked together by a central stalk and a peripheral stalk. During catalysis, ATP synthesis in the catalytic domain of F(1) is coupled via a rotary mechanism of the central stalk subunits to proton translocation. Functionally, this protein is part of the stalk that links CF(0) to CF(1). It either transmits conformational changes from CF(0) to CF(1) or is implicated in proton conduction. This chain is ATP synthase subunit delta, found in Campylobacter jejuni subsp. jejuni serotype O:6 (strain 81116 / NCTC 11828).